Here is a 178-residue protein sequence, read N- to C-terminus: uncharacterized protein (178 aa).

Residues 7-29 (FFVIFSILWGSLFLFSIIGSLGT) form a helical membrane-spanning segment.

The protein localises to the membrane. This is an uncharacterized protein from Bacillus subtilis (strain 168).